A 514-amino-acid chain; its full sequence is Cholesterol side-chain cleavage enzyme, mitochondrial (514 aa).

Residues 1-39 (SFRLSLSASTYAQRGSFTTPEHDFTLFPHRNHSVTSESR) constitute a mitochondrion transit peptide. Residue Cys-461 participates in heme binding.

Belongs to the cytochrome P450 family. Heme serves as cofactor.

It localises to the mitochondrion inner membrane. It catalyses the reaction 6 reduced [adrenodoxin] + cholesterol + 3 O2 + 6 H(+) = 4-methylpentanal + pregnenolone + 6 oxidized [adrenodoxin] + 4 H2O. The protein operates within lipid metabolism; C21-steroid hormone metabolism. Its function is as follows. Catalyzes the side-chain cleavage reaction of cholesterol to pregnenolone, the precursor of most steroid hormones. This Hypanus americanus (Southern stingray) protein is Cholesterol side-chain cleavage enzyme, mitochondrial (CYP11A1).